The chain runs to 514 residues: MSVMTIQRRWLVAAGVTAAMVASPVWAAKDAVIAVGSTFTSLDPYDANDSLSQTVAKSFYQGLFGFDKDMKLINVLADSYDISSDGLTYTVKLHPGVKFHDGSAFNAAAVKVNLDRASNPDNRLKRYNLFKMIDKTEAVDDLTVKITLKTPFSAFVNNLAHPAAVMISPAALTQYGKEIGFHPVGTGPYRFVAWNQTDFVKVEKFSGYWKAGLPKLDSITWRPVVDNNTRAALLQTGEAQFAYPIPFEQAKVLEKNDKLALVASPSILHRYISMNVTQKPFDNPKVRQALNYAINKDALIKVAFSGYATPAEGPLPNSIDYSVKYHPWPYDPAKARELLKEAGYPNGFTTTLWSSHNHSTAQKVLQFTQQQLAQVGVKVQVTAMDAGQRAAEVEGKGVKETGVRLFYTGWSASTGEADWALSPLFATASWPPAQFNTAFYSNPQVDTDLANALKTTDRAEKQTLYKDAQDKIWADAPWIFLATERLVSANSKKLTGFYVMPDTLFSFEDADLTE.

The N-terminal stretch at 1–27 (MSVMTIQRRWLVAAGVTAAMVASPVWA) is a signal peptide.

This sequence belongs to the bacterial solute-binding protein 5 family. As to quaternary structure, the complex is composed of two ATP-binding proteins (GsiA), two transmembrane proteins (GsiC and GsiD) and a solute-binding protein (GsiB).

Its subcellular location is the periplasm. In terms of biological role, part of the ABC transporter complex GsiABCD involved in glutathione import. Binds glutathione. This chain is Glutathione-binding protein GsiB, found in Pectobacterium atrosepticum (strain SCRI 1043 / ATCC BAA-672) (Erwinia carotovora subsp. atroseptica).